A 252-amino-acid polypeptide reads, in one-letter code: Trans-aconitate 2-methyltransferase (252 aa).

It belongs to the methyltransferase superfamily. Tam family. Monomer.

The protein resides in the cytoplasm. It carries out the reaction trans-aconitate + S-adenosyl-L-methionine = (E)-3-(methoxycarbonyl)pent-2-enedioate + S-adenosyl-L-homocysteine. Catalyzes the S-adenosylmethionine monomethyl esterification of trans-aconitate at high affinity and of cis-aconitate, isocitrate, and citrate at lower velocities and affinities. This is Trans-aconitate 2-methyltransferase (tam) from Escherichia coli O157:H7.